A 198-amino-acid polypeptide reads, in one-letter code: Na(+)-translocating NADH-quinone reductase subunit E (198 aa).

The next 6 membrane-spanning stretches (helical) occupy residues 11-31 (SIFI…FLAV), 39-59 (MGLG…NNLI), 77-97 (FLSF…LEMA), 110-130 (GIFL…SFMV), 140-160 (VVYG…MAGI), and 176-196 (LGIT…FSGI).

It belongs to the NqrDE/RnfAE family. In terms of assembly, composed of six subunits; NqrA, NqrB, NqrC, NqrD, NqrE and NqrF.

The protein localises to the cell inner membrane. The catalysed reaction is a ubiquinone + n Na(+)(in) + NADH + H(+) = a ubiquinol + n Na(+)(out) + NAD(+). NQR complex catalyzes the reduction of ubiquinone-1 to ubiquinol by two successive reactions, coupled with the transport of Na(+) ions from the cytoplasm to the periplasm. NqrA to NqrE are probably involved in the second step, the conversion of ubisemiquinone to ubiquinol. The chain is Na(+)-translocating NADH-quinone reductase subunit E from Aeromonas salmonicida (strain A449).